The following is a 666-amino-acid chain: Neopullulanase 1 (666 aa).

The first 29 residues, 1-29, serve as a signal peptide directing secretion; it reads MIKLLKPMSLSILLVFILSFSFPFPTAKA. The Ca(2+) site is built by A31, D33, N35, D71, D125, N174, D176, N179, D180, G216, and D218. H296 contributes to the substrate binding site. Positions 305, 309, 310, 312, and 317 each coordinate Ca(2+). Residue R383 participates in substrate binding. D385 functions as the Nucleophile in the catalytic mechanism. Residue E425 is the Proton donor of the active site. Substrate-binding positions include 500-501, D545, and R549; that span reads HD.

The protein belongs to the glycosyl hydrolase 13 family. Ca(2+) serves as cofactor.

It localises to the secreted. It catalyses the reaction Hydrolysis of pullulan to panose (6-alpha-D-glucosylmaltose).. In terms of biological role, endohydrolysis of 1,4-alpha-glucosidic linkages in pullulan to form panose. Also hydrolyzes cyclodextrins. This Thermoactinomyces vulgaris protein is Neopullulanase 1 (tvaI).